A 146-amino-acid polypeptide reads, in one-letter code: uncharacterized protein (146 aa).

This sequence to E.coli YmfS.

This is an uncharacterized protein from Escherichia coli (strain K12).